Reading from the N-terminus, the 318-residue chain is NADH-ubiquinone oxidoreductase chain 1 (318 aa).

8 helical membrane passes run 3–23 (LINVLSLIIPILLAVAFLTLL), 69–89 (LMFTLAPTLALTLALSLWIPI), 100–120 (LGVLFILAMSSLAVYSILWSG), 135–155 (AVAQTISYEVTLAIILLSIMM), 171–191 (HMWLIFPLWPLAMMWFISTLA), 223–243 (FFLAEYANIIMMNALTAILFF), 253–273 (ELHTLNLITKTLILTMMFLWV), and 293–313 (FLPLTLALCMLHVSAPATFAG).

Belongs to the complex I subunit 1 family.

The protein resides in the mitochondrion inner membrane. The catalysed reaction is a ubiquinone + NADH + 5 H(+)(in) = a ubiquinol + NAD(+) + 4 H(+)(out). Functionally, core subunit of the mitochondrial membrane respiratory chain NADH dehydrogenase (Complex I) that is believed to belong to the minimal assembly required for catalysis. Complex I functions in the transfer of electrons from NADH to the respiratory chain. The immediate electron acceptor for the enzyme is believed to be ubiquinone. This Dasypus novemcinctus (Nine-banded armadillo) protein is NADH-ubiquinone oxidoreductase chain 1 (MT-ND1).